Here is a 454-residue protein sequence, read N- to C-terminus: Chromosomal replication initiator protein DnaA (454 aa).

The domain I, interacts with DnaA modulators stretch occupies residues 1-79 (MSLCLWKQCL…NSPLIKFEIY (79 aa)). Residues 79-117 (YQIYKENKLKKNIENNNNNKNEKLIWSNIPKFKNLSYRS) are domain II. Residues 118 to 334 (NINKRYNFQN…GALNRVILNS (217 aa)) are domain III, AAA+ region. ATP contacts are provided by glycine 162, glycine 164, lysine 165, and threonine 166. The tract at residues 335 to 454 (RFTHRAITVD…FLNLIRTLSK (120 aa)) is domain IV, binds dsDNA.

Belongs to the DnaA family. Oligomerizes as a right-handed, spiral filament on DNA at oriC.

It localises to the cytoplasm. Its function is as follows. Plays an essential role in the initiation and regulation of chromosomal replication. ATP-DnaA binds to the origin of replication (oriC) to initiate formation of the DNA replication initiation complex once per cell cycle. Binds the DnaA box (a 9 base pair repeat at the origin) and separates the double-stranded (ds)DNA. Forms a right-handed helical filament on oriC DNA; dsDNA binds to the exterior of the filament while single-stranded (ss)DNA is stabiized in the filament's interior. The ATP-DnaA-oriC complex binds and stabilizes one strand of the AT-rich DNA unwinding element (DUE), permitting loading of DNA polymerase. After initiation quickly degrades to an ADP-DnaA complex that is not apt for DNA replication. Binds acidic phospholipids. This is Chromosomal replication initiator protein DnaA from Buchnera aphidicola subsp. Acyrthosiphon pisum (strain 5A).